A 37-amino-acid polypeptide reads, in one-letter code: Cytochrome b6-f complex subunit 5 (37 aa).

A helical transmembrane segment spans residues 5–25 (LLSGIVPGLIPITLAGSFVIA).

The protein belongs to the PetG family. As to quaternary structure, the 4 large subunits of the cytochrome b6-f complex are cytochrome b6, subunit IV (17 kDa polypeptide, PetD), cytochrome f and the Rieske protein, while the 4 small subunits are PetG, PetL, PetM and PetN. The complex functions as a dimer.

The protein resides in the plastid membrane. In terms of biological role, component of the cytochrome b6-f complex, which mediates electron transfer between photosystem II (PSII) and photosystem I (PSI), cyclic electron flow around PSI, and state transitions. PetG is required for either the stability or assembly of the cytochrome b6-f complex. This Aneura mirabilis (Parasitic liverwort) protein is Cytochrome b6-f complex subunit 5.